A 257-amino-acid polypeptide reads, in one-letter code: 1-acyl-sn-glycerol-3-phosphate acyltransferase (257 aa).

Residues 10-30 (VLFYLLLSASAFVWGTLSFFI) form a helical membrane-spanning segment. Residues 82–87 (HQSTWE) carry the HXXXXD motif motif. A helical membrane pass occupies residues 105–125 (ELLYVPFFGWALALLKPIAID).

The protein belongs to the 1-acyl-sn-glycerol-3-phosphate acyltransferase family.

Its subcellular location is the cell inner membrane. It catalyses the reaction a 1-acyl-sn-glycero-3-phosphate + an acyl-CoA = a 1,2-diacyl-sn-glycero-3-phosphate + CoA. Its pathway is phospholipid metabolism; CDP-diacylglycerol biosynthesis; CDP-diacylglycerol from sn-glycerol 3-phosphate: step 2/3. Its function is as follows. Converts lysophosphatidic acid (LPA) into phosphatidic acid by incorporating acyl moiety at the 2 position. The polypeptide is 1-acyl-sn-glycerol-3-phosphate acyltransferase (Pseudomonas aeruginosa (strain ATCC 15692 / DSM 22644 / CIP 104116 / JCM 14847 / LMG 12228 / 1C / PRS 101 / PAO1)).